We begin with the raw amino-acid sequence, 206 residues long: Small ribosomal subunit protein uS4 (206 aa).

A disordered region spans residues asparagine 18–serine 46. Residues arginine 94–isoleucine 154 form the S4 RNA-binding domain.

This sequence belongs to the universal ribosomal protein uS4 family. As to quaternary structure, part of the 30S ribosomal subunit. Contacts protein S5. The interaction surface between S4 and S5 is involved in control of translational fidelity.

One of the primary rRNA binding proteins, it binds directly to 16S rRNA where it nucleates assembly of the body of the 30S subunit. Functionally, with S5 and S12 plays an important role in translational accuracy. This is Small ribosomal subunit protein uS4 from Roseobacter denitrificans (strain ATCC 33942 / OCh 114) (Erythrobacter sp. (strain OCh 114)).